The sequence spans 247 residues: Mycofactocin precursor peptide peptidase (247 aa).

5 residues coordinate a divalent metal cation: glutamate 38, histidine 40, aspartate 49, histidine 124, and glutamate 163.

It belongs to the creatininase superfamily. In terms of assembly, homooctamer. Fe(2+) serves as cofactor. It depends on Zn(2+) as a cofactor.

The enzyme catalyses [mycofactocin precursor peptide]-C-terminal glycyl-N-{5-[(4-hydroxyphenyl)methyl]-4,4-dimethyl-2-oxopyrrolidin-3-yl}acetamide + H2O = [mycofactocin precursor peptide]-C-terminal glycine + 3-amino-5-[(4-hydroxyphenyl)methyl]-4,4-dimethyl-2-pyrrolidin-2-one. In terms of biological role, peptidase involved in the biosynthesis of the enzyme cofactor mycofactocin (MFT). Catalyzes cleavage of the MftC-modified MftA peptide to liberate its final two residues, which consist of a cross-linked valine-decarboxylated tyrosine dipeptide (named 3-amino-5-[(4-hydroxyphenyl)methyl]-4,4-dimethyl-2-pyrrolidin-2-one or ADHP). Is required for the in vivo ethanol assimilation in M.smegmatis. This Mycolicibacterium smegmatis (strain ATCC 700084 / mc(2)155) (Mycobacterium smegmatis) protein is Mycofactocin precursor peptide peptidase.